Consider the following 695-residue polypeptide: Elongation factor G 1 (695 aa).

Residues 6–281 (TRYRNIGIFA…AVVDYLPNPK (276 aa)) enclose the tr-type G domain. GTP-binding positions include 15–22 (AHVDAGKT), 79–83 (DTPGH), and 133–136 (NKLD).

The protein belongs to the TRAFAC class translation factor GTPase superfamily. Classic translation factor GTPase family. EF-G/EF-2 subfamily.

It localises to the cytoplasm. Catalyzes the GTP-dependent ribosomal translocation step during translation elongation. During this step, the ribosome changes from the pre-translocational (PRE) to the post-translocational (POST) state as the newly formed A-site-bound peptidyl-tRNA and P-site-bound deacylated tRNA move to the P and E sites, respectively. Catalyzes the coordinated movement of the two tRNA molecules, the mRNA and conformational changes in the ribosome. This chain is Elongation factor G 1 (fusA), found in Synechocystis sp. (strain ATCC 27184 / PCC 6803 / Kazusa).